The following is a 282-amino-acid chain: ATP synthase gamma chain (282 aa).

The protein belongs to the ATPase gamma chain family. In terms of assembly, F-type ATPases have 2 components, CF(1) - the catalytic core - and CF(0) - the membrane proton channel. CF(1) has five subunits: alpha(3), beta(3), gamma(1), delta(1), epsilon(1). CF(0) has three main subunits: a, b and c. In this bacterium the a and b subunits are transcribed but do not seem to be translated, thus the ATP synthase consists of the alpha, beta, gamma, delta, epsilon and c subunits.

It is found in the cell membrane. Produces ATP from ADP in the presence of a proton gradient across the membrane. The gamma chain is believed to be important in regulating ATPase activity and the flow of protons through the CF(0) complex. The polypeptide is ATP synthase gamma chain (Moorella thermoacetica (strain ATCC 39073 / JCM 9320)).